The primary structure comprises 152 residues: SKP1-like protein 11 (152 aa).

Residues 94–152 (ILAANYLNIKSLLDLTCQTVADMIKGKTPEEIRSTFNIENDFTPEEEEAVRKENQWAFE) form an interaction with the F-box domain of F-box proteins region.

The protein belongs to the SKP1 family. Part of a SCF (SKP1-cullin-F-box) protein ligase complex. Interacts with ADO3/FKF1, COI1/FBL2, EBF1/FBL6, PP2A13, PP2B10, UFO, SKIP2, SKIP15, SKIP16, SKIP32, CPR1/CPR30, At1g55000, At1g67340, At1g78100, At3g04660, At3g16740, At3g61590, At4g38940 and At5g49610. Expressed in young seedlings, cotyledons, roots, leaves, floral stems, inflorescences, pollen, and siliques, with a slightly higher level in inflorescence than in other tissues.

It localises to the nucleus. The protein operates within protein modification; protein ubiquitination. Involved in ubiquitination and subsequent proteasomal degradation of target proteins. Together with CUL1, RBX1 and a F-box protein, it forms a SCF E3 ubiquitin ligase complex. The functional specificity of this complex depends on the type of F-box protein. In the SCF complex, it serves as an adapter that links the F-box protein to CUL1. Plays a role during early flowers reproductive development. This chain is SKP1-like protein 11 (ASK11), found in Arabidopsis thaliana (Mouse-ear cress).